We begin with the raw amino-acid sequence, 241 residues long: Glucosamine-6-phosphate deaminase (241 aa).

Residue Asp67 is the Proton acceptor; for enolization step of the active site. Catalysis depends on Asn136, which acts as the For ring-opening step. The active-site Proton acceptor; for ring-opening step is the His138. Glu143 acts as the For ring-opening step in catalysis.

This sequence belongs to the glucosamine/galactosamine-6-phosphate isomerase family. NagB subfamily.

The enzyme catalyses alpha-D-glucosamine 6-phosphate + H2O = beta-D-fructose 6-phosphate + NH4(+). It participates in amino-sugar metabolism; N-acetylneuraminate degradation; D-fructose 6-phosphate from N-acetylneuraminate: step 5/5. Its function is as follows. Catalyzes the reversible isomerization-deamination of glucosamine 6-phosphate (GlcN6P) to form fructose 6-phosphate (Fru6P) and ammonium ion. The protein is Glucosamine-6-phosphate deaminase of Clostridium acetobutylicum (strain ATCC 824 / DSM 792 / JCM 1419 / IAM 19013 / LMG 5710 / NBRC 13948 / NRRL B-527 / VKM B-1787 / 2291 / W).